The primary structure comprises 92 residues: Phosphoribosyl-ATP pyrophosphatase (92 aa).

Belongs to the PRA-PH family.

Its subcellular location is the cytoplasm. It catalyses the reaction 1-(5-phospho-beta-D-ribosyl)-ATP + H2O = 1-(5-phospho-beta-D-ribosyl)-5'-AMP + diphosphate + H(+). It functions in the pathway amino-acid biosynthesis; L-histidine biosynthesis; L-histidine from 5-phospho-alpha-D-ribose 1-diphosphate: step 2/9. This Leptospira borgpetersenii serovar Hardjo-bovis (strain JB197) protein is Phosphoribosyl-ATP pyrophosphatase.